The chain runs to 1035 residues: DNA polymerase I B, mitochondrial (1035 aa).

A mitochondrion-targeting transit peptide spans 1–42; the sequence is MAVAPPLPPAPARLLRRWQGSSPWLSSSFGRTRYFSRPAFAA. Residues 100–124 form a disordered region; sequence TNGTTPLRVGNLRHDPSEDIRSSNY. A compositionally biased stretch (basic and acidic residues) spans 111 to 120; it reads LRHDPSEDIR. Residues 317–478 form the 3'-5' exonuclease domain; the sequence is FGNGKTCIWV…LYESLKNKLE (162 aa). Residues 699–1032 form a polymerase region; the sequence is HAIAALCEVF…VDAKYAKSWY (334 aa).

The protein belongs to the DNA polymerase type-A family.

The protein localises to the mitochondrion. The enzyme catalyses DNA(n) + a 2'-deoxyribonucleoside 5'-triphosphate = DNA(n+1) + diphosphate. With respect to regulation, not inhibited by aphidicolin. In terms of biological role, in addition to polymerase activity, this DNA polymerase exhibits 5'-3' exonuclease activity. May be required for DNA replication and accumulation in mitochondria. The protein is DNA polymerase I B, mitochondrial of Oryza sativa subsp. japonica (Rice).